A 173-amino-acid polypeptide reads, in one-letter code: Shikimate kinase 1 (173 aa).

ATP is bound at residue Gly14–Thr19. A Mg(2+)-binding site is contributed by Ser18. Substrate-binding residues include Asp36, Arg60, and Gly82. Arg120 provides a ligand contact to ATP. Arg140 contacts substrate. Gln157 is an ATP binding site.

This sequence belongs to the shikimate kinase family. As to quaternary structure, monomer. Mg(2+) is required as a cofactor.

It is found in the cytoplasm. It catalyses the reaction shikimate + ATP = 3-phosphoshikimate + ADP + H(+). The protein operates within metabolic intermediate biosynthesis; chorismate biosynthesis; chorismate from D-erythrose 4-phosphate and phosphoenolpyruvate: step 5/7. In terms of biological role, catalyzes the specific phosphorylation of the 3-hydroxyl group of shikimic acid using ATP as a cosubstrate. The sequence is that of Shikimate kinase 1 from Shigella boydii serotype 18 (strain CDC 3083-94 / BS512).